The following is a 411-amino-acid chain: Serine hydroxymethyltransferase (411 aa).

Residues L119 and 123-125 contribute to the (6S)-5,6,7,8-tetrahydrofolate site; that span reads GHL. The residue at position 228 (K228) is an N6-(pyridoxal phosphate)lysine. A (6S)-5,6,7,8-tetrahydrofolate-binding site is contributed by 351–353; the sequence is SPF.

This sequence belongs to the SHMT family. Homodimer. Pyridoxal 5'-phosphate is required as a cofactor.

Its subcellular location is the cytoplasm. The enzyme catalyses (6R)-5,10-methylene-5,6,7,8-tetrahydrofolate + glycine + H2O = (6S)-5,6,7,8-tetrahydrofolate + L-serine. The protein operates within one-carbon metabolism; tetrahydrofolate interconversion. It functions in the pathway amino-acid biosynthesis; glycine biosynthesis; glycine from L-serine: step 1/1. Catalyzes the reversible interconversion of serine and glycine with tetrahydrofolate (THF) serving as the one-carbon carrier. This reaction serves as the major source of one-carbon groups required for the biosynthesis of purines, thymidylate, methionine, and other important biomolecules. Also exhibits THF-independent aldolase activity toward beta-hydroxyamino acids, producing glycine and aldehydes, via a retro-aldol mechanism. The sequence is that of Serine hydroxymethyltransferase from Clostridium novyi (strain NT).